Reading from the N-terminus, the 458-residue chain is MPN domain-containing protein (458 aa).

Residues 1–37 form a disordered region; the sequence is MGSEPPSSPQVVEEGADEEDEELSGAEDADLRSSSGR. Residues 14–28 show a composition bias toward acidic residues; that stretch reads EGADEEDEELSGAED. The RAMA domain maps to 42 to 137; sequence TRRGITLRVL…QYKTTWLHKY (96 aa). Positions 94, 96, and 116 each coordinate DNA. A disordered region spans residues 147–175; it reads SEGEDDEMGDDDEEEGKTTIPVEDKNKKS. Residues 148–161 show a composition bias toward acidic residues; it reads EGEDDEMGDDDEEE. In terms of domain architecture, MPN spans 229-364; sequence VAVSSNVLLL…VASTITPFWV (136 aa). Histidine 306, histidine 308, and aspartate 319 together coordinate Zn(2+). The short motif at 306–319 is the JAMM motif element; it reads HSHPRGPALPSLQD.

This sequence belongs to the peptidase M67 family. Post-translationally, degraded following binding to N(6)-methyladenosine methylated DNA (m6A).

In terms of biological role, probable protease. Acts as a sensor of N(6)-methyladenosine methylation on DNA (m6A): recognizes and binds m6A DNA, leading to its degradation. Binds only double strand DNA (dsDNA) in a sequence-independent manner. The chain is MPN domain-containing protein from Danio rerio (Zebrafish).